We begin with the raw amino-acid sequence, 538 residues long: MSSVAENIIQHATHNSTLHQLAKDQPSVGVTTAFSILDTLKSMSYLKIFATLICILLVWDQVAYQIKKGSIAGPKFKFWPIIGPFLESLDPKFEEYKAKWASGPLSCVSIFHKFVVIASTRDLARKILQSSKFVKPCVVDVAVKILRPCNWVFLDGKAHTDYRKSLNGLFTKQALAQYLPSLEQIMDKYMDKFVRLSKENNYEPQVFFHEMREILCALSLNSFCGNYITEDQVRKIADDYYLVTAALELVNFPIIIPYTKTWYGKKTADMAMKIFENCAQMAKDHIAAGGKPVCVMDAWCKLMHDAKNSNDDDSRIYHREFTNKEISEAVFTFLFASQDASSSLACWLFQIVADRPDVLAKIREEQLAVRNNDMSTELNLDLIEKMKYTNMVIKETLRYRPPVLMVPYVVKKNFPVSPNYTAPKGAMLIPTLYPALHDPEVYENPDEFIPERWVEGSKASEAKKNWLVFGCGPHVCLGQTYVMITFAALLGKFALYTDFHHTVTPLSEKIKVFATIFPKDDLLLTFKKRDPITGEVFE.

The chain crosses the membrane as a helical span at residues 46-66; it reads LKIFATLICILLVWDQVAYQI. Residues Lys164 and Lys198 each participate in a glycyl lysine isopeptide (Lys-Gly) (interchain with G-Cter in ubiquitin) cross-link. Cys476 is a heme binding site.

It belongs to the cytochrome P450 family. In terms of assembly, interacts with ERG28. The cofactor is heme.

Its subcellular location is the endoplasmic reticulum membrane. It carries out the reaction 5-dehydroepisterol + NADPH + O2 + H(+) = ergosta-5,7,22,24(28)-tetraen-3beta-ol + NADP(+) + 2 H2O. It participates in steroid metabolism; ergosterol biosynthesis; ergosterol from zymosterol: step 4/5. Functionally, C-22 sterol desaturase; part of the third module of ergosterol biosynthesis pathway that includes the late steps of the pathway. ERG5 converts 5-dehydroepisterol into ergosta-5,7,22,24(28)-tetraen-3beta-ol by forming the C-22(23) double bond in the sterol side chain. The third module or late pathway involves the ergosterol synthesis itself through consecutive reactions that mainly occur in the endoplasmic reticulum (ER) membrane. Firstly, the squalene synthase ERG9 catalyzes the condensation of 2 farnesyl pyrophosphate moieties to form squalene, which is the precursor of all steroids. Squalene synthase is crucial for balancing the incorporation of farnesyl diphosphate (FPP) into sterol and nonsterol isoprene synthesis. Secondly, the squalene epoxidase ERG1 catalyzes the stereospecific oxidation of squalene to (S)-2,3-epoxysqualene, which is considered to be a rate-limiting enzyme in steroid biosynthesis. Then, the lanosterol synthase ERG7 catalyzes the cyclization of (S)-2,3 oxidosqualene to lanosterol, a reaction that forms the sterol core. In the next steps, lanosterol is transformed to zymosterol through a complex process involving various demethylation, reduction and desaturation reactions. The lanosterol 14-alpha-demethylase ERG11 (also known as CYP51) catalyzes C14-demethylation of lanosterol to produce 4,4'-dimethyl cholesta-8,14,24-triene-3-beta-ol, which is critical for ergosterol biosynthesis. The C-14 reductase ERG24 reduces the C14=C15 double bond of 4,4-dimethyl-cholesta-8,14,24-trienol to produce 4,4-dimethyl-cholesta-8,24-dienol. 4,4-dimethyl-cholesta-8,24-dienol is substrate of the C-4 demethylation complex ERG25-ERG26-ERG27 in which ERG25 catalyzes the three-step monooxygenation required for the demethylation of 4,4-dimethyl and 4alpha-methylsterols, ERG26 catalyzes the oxidative decarboxylation that results in a reduction of the 3-beta-hydroxy group at the C-3 carbon to an oxo group, and ERG27 is responsible for the reduction of the keto group on the C-3. ERG28 has a role as a scaffold to help anchor ERG25, ERG26 and ERG27 to the endoplasmic reticulum and ERG29 regulates the activity of the iron-containing C4-methylsterol oxidase ERG25. Then, the sterol 24-C-methyltransferase ERG6 catalyzes the methyl transfer from S-adenosyl-methionine to the C-24 of zymosterol to form fecosterol. The C-8 sterol isomerase ERG2 catalyzes the reaction which results in unsaturation at C-7 in the B ring of sterols and thus converts fecosterol to episterol. The sterol-C5-desaturase ERG3 then catalyzes the introduction of a C-5 double bond in the B ring to produce 5-dehydroepisterol. The C-22 sterol desaturase ERG5 further converts 5-dehydroepisterol into ergosta-5,7,22,24(28)-tetraen-3beta-ol by forming the C-22(23) double bond in the sterol side chain. Finally, ergosta-5,7,22,24(28)-tetraen-3beta-ol is substrate of the C-24(28) sterol reductase ERG4 to produce ergosterol. This chain is C-22 sterol desaturase ERG5, found in Saccharomyces cerevisiae (strain ATCC 204508 / S288c) (Baker's yeast).